A 479-amino-acid polypeptide reads, in one-letter code: FK506-binding protein 4 (479 aa).

Disordered regions lie at residues 39 to 106 (IDPD…ARKL), 141 to 162 (VKGKAPATDDDDEDAESDEGLD), and 205 to 367 (GNYV…KTTG). Acidic residues-rich tracts occupy residues 40 to 49 (DPDEAPEFDD), 68 to 93 (LDEEDSDDDYEDEDDSEDDSEDDEEV), 148 to 162 (TDDDDEDAESDEGLD), and 214 to 256 (PRDD…DLDG). 3 stretches are compositionally biased toward basic and acidic residues: residues 272–299 (APKLVDAKGKKKRGADEAALEAKDDKAK), 325–334 (AKPEQKETKK), and 348–364 (SKERKPDEKKPADKAEK). Residues 393–479 (GNTVAMRYIG…IFDVKLLEIK (87 aa)) form the PPIase FKBP-type domain.

The protein belongs to the FKBP-type PPIase family. FKBP3/4 subfamily. As to quaternary structure, binds to histones H3 and H4.

Its subcellular location is the nucleus. The enzyme catalyses [protein]-peptidylproline (omega=180) = [protein]-peptidylproline (omega=0). Inhibited by both FK506 and rapamycin. In terms of biological role, PPIase that acts as a histone chaperone. Histone proline isomerase that increases the rate of cis-trans isomerization at prolines on the histone H3 N-terminal tail. Proline isomerization influences H3 methylation thereby regulating gene expression. In Emericella nidulans (strain FGSC A4 / ATCC 38163 / CBS 112.46 / NRRL 194 / M139) (Aspergillus nidulans), this protein is FK506-binding protein 4 (fpr4).